The sequence spans 279 residues: Proteasome subunit beta (279 aa).

A propeptide spans 1-53 (removed in mature form; by autocatalysis); it reads MSGTAEFPGRIPAPYLEVGSSSFVELLGSVAPELLPGRRPLPPGDMGDAAPHG. Catalysis depends on T54, which acts as the Nucleophile.

This sequence belongs to the peptidase T1B family. As to quaternary structure, the 20S proteasome core is composed of 14 alpha and 14 beta subunits that assemble into four stacked heptameric rings, resulting in a barrel-shaped structure. The two inner rings, each composed of seven catalytic beta subunits, are sandwiched by two outer rings, each composed of seven alpha subunits. The catalytic chamber with the active sites is on the inside of the barrel. Has a gated structure, the ends of the cylinder being occluded by the N-termini of the alpha-subunits. Is capped by the proteasome-associated ATPase, ARC.

The protein localises to the cytoplasm. The catalysed reaction is Cleavage of peptide bonds with very broad specificity.. The protein operates within protein degradation; proteasomal Pup-dependent pathway. Its activity is regulated as follows. The formation of the proteasomal ATPase ARC-20S proteasome complex, likely via the docking of the C-termini of ARC into the intersubunit pockets in the alpha-rings, may trigger opening of the gate for substrate entry. Interconversion between the open-gate and close-gate conformations leads to a dynamic regulation of the 20S proteasome proteolysis activity. Functionally, component of the proteasome core, a large protease complex with broad specificity involved in protein degradation. This chain is Proteasome subunit beta, found in Stackebrandtia nassauensis (strain DSM 44728 / CIP 108903 / NRRL B-16338 / NBRC 102104 / LLR-40K-21).